A 365-amino-acid chain; its full sequence is Outer membrane protein assembly factor BamC (365 aa).

Positions Met-1–Ala-16 are cleaved as a signal peptide. Cys-17 carries N-palmitoyl cysteine lipidation. A lipid anchor (S-diacylglycerol cysteine) is attached at Cys-17.

Belongs to the BamC family. Part of the Bam complex.

The protein localises to the cell outer membrane. Functionally, part of the outer membrane protein assembly complex, which is involved in assembly and insertion of beta-barrel proteins into the outer membrane. The sequence is that of Outer membrane protein assembly factor BamC from Shewanella oneidensis (strain ATCC 700550 / JCM 31522 / CIP 106686 / LMG 19005 / NCIMB 14063 / MR-1).